Consider the following 62-residue polypeptide: Enterocin E-760 (62 aa).

The protein localises to the secreted. Bacteriocin active against the Gram-negative bacteria S.enteritidis, S.choleraesuis, S.typhimurium, S.gallinarum, E.coli O157:H7, Y.enterocolitica, C.freundii, K.pneumoniae, S.dysentriae, P.aeruginosa, P.mirabilis, M.morganii, C.jejuni and 20 other Campylobacter isolates, and the Gram-positive bacteria S.aureus, S.epidermidis and L.monocytogenes. The chain is Enterocin E-760 from Enterococcus sp.